A 233-amino-acid chain; its full sequence is Adenosine 5'-phosphosulfate reductase (233 aa).

The [4Fe-4S] cluster site is built by C120, C121, C203, and C206. Catalysis depends on C229, which acts as the Nucleophile; cysteine thiosulfonate intermediate.

It belongs to the PAPS reductase family. CysH subfamily. The cofactor is [4Fe-4S] cluster.

Its subcellular location is the cytoplasm. The enzyme catalyses [thioredoxin]-disulfide + sulfite + AMP + 2 H(+) = adenosine 5'-phosphosulfate + [thioredoxin]-dithiol. The protein operates within sulfur metabolism; hydrogen sulfide biosynthesis; sulfite from sulfate. Catalyzes the formation of sulfite from adenosine 5'-phosphosulfate (APS) using thioredoxin as an electron donor. The protein is Adenosine 5'-phosphosulfate reductase of Bacillus pumilus (strain SAFR-032).